A 560-amino-acid chain; its full sequence is Putative protease Do-like 11, mitochondrial (560 aa).

The transit peptide at 1–65 (MFFRPCVHTV…RRSSTSAAER (65 aa)) directs the protein to the mitochondrion. A serine protease region spans residues 117-302 (TEYSKSKPWK…ESRQYSCFGS (186 aa)). Residues H150, D184, and S258 each act as charge relay system in the active site. The 97-residue stretch at 288–384 (ITSVQESRQY…YLVSMKKPGE (97 aa)) folds into the PDZ domain.

Belongs to the peptidase S1C family.

It localises to the mitochondrion membrane. Putative serine protease. This Arabidopsis thaliana (Mouse-ear cress) protein is Putative protease Do-like 11, mitochondrial (DEGP11).